Consider the following 510-residue polypeptide: Cytochrome c-552 (510 aa).

Positions Met1–Ala50 are cleaved as a signal peptide. Heme c is bound at residue His124. Heme-binding residues include Cys152, Cys155, and Lys156. Residues Cys190, Cys193, His194, Cys239, Cys242, and His243 each contribute to the heme c site. Ca(2+) contacts are provided by Glu245, Tyr246, Lys291, and Gln293. Substrate is bound at residue Tyr246. Position 294 (His294) interacts with substrate. Heme c-binding residues include His305, Cys312, Cys315, His316, His331, Cys344, Cys347, His348, and His423.

The protein belongs to the cytochrome c-552 family. It depends on Ca(2+) as a cofactor. Heme c serves as cofactor.

Its subcellular location is the periplasm. It carries out the reaction 6 Fe(III)-[cytochrome c] + NH4(+) + 2 H2O = 6 Fe(II)-[cytochrome c] + nitrite + 8 H(+). Its pathway is nitrogen metabolism; nitrate reduction (assimilation). In terms of biological role, catalyzes the reduction of nitrite to ammonia, consuming six electrons in the process. In Pasteurella multocida (strain Pm70), this protein is Cytochrome c-552.